Consider the following 466-residue polypeptide: Protein hob1 (466 aa).

Residues 17-269 form the BAR domain; sequence LRSKFNVGEI…RGDVKDRAEA (253 aa). Coiled-coil stretches lie at residues 31-67 and 177-204; these read IYEDAGRRFKSLETEAKKLAEDAKKYTDAINGLLNHQ and EKKLYEAETAFEQSSQEYEYYNEMLKEE. A disordered region spans residues 280–342; that stretch reads PTYKRPGMGP…ASDYSTPSAG (63 aa). The segment covering 294–303 has biased composition (low complexity); that stretch reads ATASSSSSFS. Residues serine 298, serine 299, serine 301, and serine 303 each carry the phosphoserine modification. The region spanning 407–466 is the SH3 domain; it reads PAAEHVVALYDYAAQAAGDLSFHAGDRIEVVSRTDNQNEWWIGRLNGAQGQFPGNYVQLE.

Has a role in DNA damage signaling as a part of stress response processes. The polypeptide is Protein hob1 (hob1) (Schizosaccharomyces pombe (strain 972 / ATCC 24843) (Fission yeast)).